The chain runs to 216 residues: Probable nicotinate-nucleotide adenylyltransferase (216 aa).

Belongs to the NadD family.

It carries out the reaction nicotinate beta-D-ribonucleotide + ATP + H(+) = deamido-NAD(+) + diphosphate. It functions in the pathway cofactor biosynthesis; NAD(+) biosynthesis; deamido-NAD(+) from nicotinate D-ribonucleotide: step 1/1. Its function is as follows. Catalyzes the reversible adenylation of nicotinate mononucleotide (NaMN) to nicotinic acid adenine dinucleotide (NaAD). This chain is Probable nicotinate-nucleotide adenylyltransferase, found in Geotalea daltonii (strain DSM 22248 / JCM 15807 / FRC-32) (Geobacter daltonii).